We begin with the raw amino-acid sequence, 175 residues long: Heme-dependent oxidative N-demethylase delta subunit (175 aa).

The heme-dependent oxidative N-demethylase (HODM) is a heterotetramer composed of a catalytic alpha subunit, a FMN/2Fe-2S-dependent oxidoreductase beta subunit, a gamma subunit with putative aminotransferase activity, and a delta subunit of unknown function.

In terms of biological role, component of the heme-dependent oxidative N-demethylase (HODM) enzyme, that catalyzes the NADPH-dependent oxidation of dimethylamine (DMA) to methylamine (MA) and formaldehyde. Functions in bacterial methylated amine catabolism, linking alkylamine oxidation to the tetrahydrofolate C1 pool. The function of the delta subunit is unknown. The protein is Heme-dependent oxidative N-demethylase delta subunit of Ectopseudomonas mendocina (strain ymp) (Pseudomonas mendocina).